The primary structure comprises 172 residues: Small ribosomal subunit protein uS5 (172 aa).

The S5 DRBM domain occupies 17 to 80 (LREKMIAVNR…DEARRKMVKV (64 aa)).

It belongs to the universal ribosomal protein uS5 family. Part of the 30S ribosomal subunit. Contacts proteins S4 and S8.

Its function is as follows. With S4 and S12 plays an important role in translational accuracy. Functionally, located at the back of the 30S subunit body where it stabilizes the conformation of the head with respect to the body. The chain is Small ribosomal subunit protein uS5 from Ralstonia nicotianae (strain ATCC BAA-1114 / GMI1000) (Ralstonia solanacearum).